The sequence spans 1283 residues: Bifunctional dioxygenase (DOX)-epoxy alcohol synthase (EAS) (1283 aa).

The tract at residues 1–64 (MAEHKNGVAT…LPKEMGDGSY (64 aa)) is disordered. The segment at 130–476 (TNSFISQLWN…DGKFNDDELV (347 aa)) is fatty acid alpha-dioxygenase. His227 serves as a coordination point for heme b. Tyr405 is a catalytic residue. His408 is a heme b binding site. The interval 684–1108 (INIIGYNAAK…WDDGCGTDLF (425 aa)) is epoxy alcohol synthase. Position 1035 (Cys1035) interacts with heme.

It in the N-terminal section; belongs to the peroxidase family. This sequence in the C-terminal section; belongs to the cytochrome P450 family. In terms of assembly, homotetramer. The cofactor is heme b. Heme is required as a cofactor.

It catalyses the reaction (9Z,12Z)-octadecadienoate + O2 = (8E,10R,12Z)-10-hydroperoxyoctadeca-8,12-dienoate. The enzyme catalyses (8E,10R,12Z)-10-hydroperoxyoctadeca-8,12-dienoate = (12S,13R)-epoxy-(10R)-hydroxy-(8E)-octadecenoate. The catalysed reaction is (9Z)-octadecenoate + O2 = (8R)-hydroperoxy-(9Z)-octadecenoate. Functionally, bifunctional dioxygenase (DOX)-epoxy alcohol synthase (EAS) that converts linoleic acid (18:2n-6) sequentially to 10(R)-hydroperoxy-8(E),12(Z)-octadecadienoic acid (10R-HPODE) and 10R-HPODE further to 12(13)-epoxy-10-hydroxy-8(E)-octa-decenoic acid as the end product. Linoleic acid is oxidized mainly to the R stereoisomer of 10-HPODE. The dioxygenase domain is also able to oygenate position C-8 of linoleic acid to produce 8(R)-hydroperoxy-8(E),12(Z)-octadecadienoic acid (8R-HPODE). The sequence is that of Bifunctional dioxygenase (DOX)-epoxy alcohol synthase (EAS) from Fusarium oxysporum (strain Fo5176) (Fusarium vascular wilt).